The chain runs to 71 residues: MPAVKVKENEPFDVALRRFKRSCEKAGVLAEVRSREFYEKPTAERKRKAAAAVKRHAKKVQREQRRAVRLY.

Residues 50–59 (AAAVKRHAKK) are compositionally biased toward basic residues. Positions 50-71 (AAAVKRHAKKVQREQRRAVRLY) are disordered. The segment covering 60–71 (VQREQRRAVRLY) has biased composition (basic and acidic residues).

It belongs to the bacterial ribosomal protein bS21 family.

This chain is Small ribosomal subunit protein bS21, found in Pseudomonas entomophila (strain L48).